Here is a 346-residue protein sequence, read N- to C-terminus: Serine/threonine-protein phosphatase PP1(4.8) (346 aa).

Positions 46-65 (QSAQTQESTPKTNGTGRATT) are disordered. Mn(2+)-binding residues include aspartate 102, histidine 104, aspartate 130, and asparagine 162. Histidine 163 (proton donor) is an active-site residue. Histidine 211 and histidine 287 together coordinate Mn(2+).

This sequence belongs to the PPP phosphatase family. PP-1 subfamily. Requires Mn(2+) as cofactor.

The catalysed reaction is O-phospho-L-seryl-[protein] + H2O = L-seryl-[protein] + phosphate. It carries out the reaction O-phospho-L-threonyl-[protein] + H2O = L-threonyl-[protein] + phosphate. This Trypanosoma brucei brucei protein is Serine/threonine-protein phosphatase PP1(4.8).